The sequence spans 80 residues: Small pacifastin protease inhibitor (80 aa).

Residues 1 to 24 (MSKVLKVGLLLLLVAVAASAYAVA) form the signal peptide. Residues 25–47 (EENGAPKENKQLPQIDDYGVTNK) constitute a propeptide that is removed on maturation. The Pacifastin domain maps to 45 to 80 (TNKCPANQPFKWNCNYCTCGPEGKDASCTRMACPQH). Intrachain disulfides connect Cys48–Cys63, Cys58–Cys77, and Cys61–Cys72.

It belongs to the protease inhibitor I19 family. Expressed in the venom apparatus. Low transcript levels are also detected in other tissues.

The protein localises to the secreted. In terms of biological role, parasitic wasp protein that may interfere with the host immune response. The recombinant protein inhibits trypsin activity and prophenoloxidase (PPO) activation, an enzyme essential for both clotting and insect innate immune responses. It does not inhibit activity of chymotrypsin and protease K, and has no effect on phenoloxidase (PO) activity. This chain is Small pacifastin protease inhibitor, found in Nasonia vitripennis (Parasitic wasp).